The chain runs to 490 residues: Glutamyl-tRNA(Gln) amidotransferase subunit A (490 aa).

Catalysis depends on charge relay system residues K78 and S153. Catalysis depends on S177, which acts as the Acyl-ester intermediate.

This sequence belongs to the amidase family. GatA subfamily. As to quaternary structure, heterotrimer of A, B and C subunits.

It catalyses the reaction L-glutamyl-tRNA(Gln) + L-glutamine + ATP + H2O = L-glutaminyl-tRNA(Gln) + L-glutamate + ADP + phosphate + H(+). Its function is as follows. Allows the formation of correctly charged Gln-tRNA(Gln) through the transamidation of misacylated Glu-tRNA(Gln) in organisms which lack glutaminyl-tRNA synthetase. The reaction takes place in the presence of glutamine and ATP through an activated gamma-phospho-Glu-tRNA(Gln). This chain is Glutamyl-tRNA(Gln) amidotransferase subunit A, found in Desulforapulum autotrophicum (strain ATCC 43914 / DSM 3382 / VKM B-1955 / HRM2) (Desulfobacterium autotrophicum).